The following is a 388-amino-acid chain: 3-sulfinopropanoyl-CoA desulfinase (388 aa).

FAD contacts are provided by residues 121–124 (ICIT), S130, and 153–156 (HWIT). 240–241 (YN) contributes to the substrate binding site. FAD contacts are provided by residues R269, Q336, 363–367 (GGTAQ), and Q384.

Belongs to the acyl-CoA dehydrogenase family. Homotrimer or homotetramer. The cofactor is FAD.

It catalyses the reaction 3-sulfinopropanoyl-CoA + H2O = propanoyl-CoA + sulfite + H(+). Catalyzes the conversion 3-sulfinopropanoyl-CoA (3SP-CoA) to propanoyl-CoA by abstraction of sulfite. Does not show dehydrogenase activity. The protein is 3-sulfinopropanoyl-CoA desulfinase of Paraburkholderia xenovorans (strain LB400).